A 564-amino-acid chain; its full sequence is Pumilio homolog 9 (564 aa).

The PUM-HD domain occupies 222–564 (LEDTVLIGQG…KIFSKTILKK (343 aa)). Pumilio repeat units lie at residues 249 to 284 (EIYG…VILL), 285 to 320 (AIID…LIVS), 321 to 359 (VLTS…ALVK), 361 to 396 (GLKP…FVLE), 397 to 432 (AATK…RLVA), 433 to 469 (EISR…VQFR), 470 to 501 (MHYA…EIVR), and 502 to 539 (ELLC…KLVA).

It is found in the cytoplasm. In terms of biological role, sequence-specific RNA-binding protein that regulates translation and mRNA stability by binding the 3'-UTR of target mRNAs. The polypeptide is Pumilio homolog 9 (APUM9) (Arabidopsis thaliana (Mouse-ear cress)).